The following is a 200-amino-acid chain: Putative AgrB-like protein (200 aa).

The next 5 helical transmembrane spans lie at 49 to 69 (LIIT…LVFM), 88 to 108 (LLCT…IQFT), 114 to 134 (LFRF…SPAV), 148 to 168 (ALKH…FLVS), and 171 to 191 (LGTI…PLKG).

The protein belongs to the AgrB family.

The protein resides in the cell membrane. May be involved in the proteolytic processing of a quorum sensing system signal molecule precursor. The protein is Putative AgrB-like protein of Lactiplantibacillus plantarum (strain ATCC BAA-793 / NCIMB 8826 / WCFS1) (Lactobacillus plantarum).